The sequence spans 379 residues: Homoserine O-succinyltransferase (379 aa).

The 310-residue stretch at 48–357 (NAVLICHALS…SAHGHDAFLM (310 aa)) folds into the AB hydrolase-1 domain. Catalysis depends on S154, which acts as the Nucleophile. R224 provides a ligand contact to substrate. Catalysis depends on residues D319 and H352. Residue D353 coordinates substrate.

This sequence belongs to the AB hydrolase superfamily. MetX family. As to quaternary structure, homodimer.

Its subcellular location is the cytoplasm. It carries out the reaction L-homoserine + succinyl-CoA = O-succinyl-L-homoserine + CoA. Its pathway is amino-acid biosynthesis; L-methionine biosynthesis via de novo pathway; O-succinyl-L-homoserine from L-homoserine: step 1/1. Functionally, transfers a succinyl group from succinyl-CoA to L-homoserine, forming succinyl-L-homoserine. The protein is Homoserine O-succinyltransferase of Neisseria gonorrhoeae (strain ATCC 700825 / FA 1090).